Reading from the N-terminus, the 402-residue chain is Envelope glycoprotein D (402 aa).

The first 30 residues, 1 to 30, serve as a signal peptide directing secretion; it reads MSTFKLMMDGRLVFAMAIAILSVVLSCGTC. The Virion surface segment spans residues 31–355; it reads EKAKRAVRGR…NSTFVGISVG (325 aa). N-linked (GlcNAc...) asparagine; by host glycosylation is found at Asn53 and Asn61. Cystine bridges form between Cys88–Cys209, Cys126–Cys223, and Cys138–Cys147. Residues 281-315 are disordered; that stretch reads PDNHPGFDSVESEITQNKTDPKPGQADPKPNQPFK. Asn297 and Asn346 each carry an N-linked (GlcNAc...) asparagine; by host glycan. The chain crosses the membrane as a helical span at residues 356–372; it reads LGIAGLVLVGVILYVCL. At 373-402 the chain is on the intravirion side; that stretch reads RRKKELKKSAQNGLTRLRSTFKDVKYTQLP.

This sequence belongs to the herpesviridae glycoprotein D family.

It localises to the virion membrane. Its function is as follows. Envelope glycoprotein that binds to host cell entry receptors, promoting the virus entry into host cells. May trigger fusion with host membrane, by recruiting the fusion machinery composed of gB and gH/gL. The sequence is that of Envelope glycoprotein D (gD) from Equus caballus (Horse).